The sequence spans 123 residues: Large ribosomal subunit protein bL12 (123 aa).

Belongs to the bacterial ribosomal protein bL12 family. Homodimer. Part of the ribosomal stalk of the 50S ribosomal subunit. Forms a multimeric L10(L12)X complex, where L10 forms an elongated spine to which 2 to 4 L12 dimers bind in a sequential fashion. Binds GTP-bound translation factors.

Its function is as follows. Forms part of the ribosomal stalk which helps the ribosome interact with GTP-bound translation factors. Is thus essential for accurate translation. The polypeptide is Large ribosomal subunit protein bL12 (Hydrogenovibrio crunogenus (strain DSM 25203 / XCL-2) (Thiomicrospira crunogena)).